Here is a 476-residue protein sequence, read N- to C-terminus: Adenosylhomocysteinase (476 aa).

3 residues coordinate substrate: Thr67, Asp142, and Glu202. Residue 203 to 205 participates in NAD(+) binding; that stretch reads TTT. Substrate is bound by residues Lys232 and Asp236. Residues Asn237, 266–271, Glu289, Asn324, 345–347, and Asn390 contribute to the NAD(+) site; these read GYGDVG and IGH.

Belongs to the adenosylhomocysteinase family. The cofactor is NAD(+).

It localises to the cytoplasm. The enzyme catalyses S-adenosyl-L-homocysteine + H2O = L-homocysteine + adenosine. The protein operates within amino-acid biosynthesis; L-homocysteine biosynthesis; L-homocysteine from S-adenosyl-L-homocysteine: step 1/1. In terms of biological role, may play a key role in the regulation of the intracellular concentration of adenosylhomocysteine. In Prochlorococcus marinus (strain MIT 9313), this protein is Adenosylhomocysteinase.